Consider the following 207-residue polypeptide: ADP-ribose pyrophosphatase (207 aa).

Residues 37–38 and arginine 64 each bind substrate; that span reads RE. The region spanning 41 to 172 is the Nudix hydrolase domain; sequence EHFGAVAIVA…EIVNSIAIAG (132 aa). Mg(2+) is bound at residue alanine 76. The Nudix box motif lies at 77 to 99; that stretch reads GLLDVAGEPPHLTAARELREEVG. Leucine 78 is a substrate binding site. Mg(2+) contacts are provided by glutamate 93 and glutamate 97. Substrate-binding positions include 114–116 and glutamate 120; that span reads APG. Glutamate 142 is a Mg(2+) binding site. The active-site Proton acceptor is the glutamate 142.

Belongs to the Nudix hydrolase family. Homodimer. Requires Mg(2+) as cofactor. It depends on Mn(2+) as a cofactor.

The catalysed reaction is ADP-D-ribose + H2O = D-ribose 5-phosphate + AMP + 2 H(+). It carries out the reaction 8-oxo-dGDP + H2O = 8-oxo-dGMP + phosphate + H(+). The enzyme catalyses 8-oxo-GDP + H2O = 8-oxo-GMP + phosphate + H(+). Functionally, catalyzes the hydrolysis of ADP-ribose (ADPR) to AMP and ribose-5-phosphate. Can also hydrolyze ADP-mannose and ADP-glucose, with lower efficiency. Has weaker activity with NAD, GDP-sugars and UDP-sugars. Also catalyzes the conversion of 8-oxo-dGDP to 8-oxo-dGMP, and 8-oxo-GDP to 8-oxo-GMP. Functions in concert with MutT1 to detoxify 8-oxo-dGTP to 8-oxo-dGMP and may play an important role in supporting cellular growth under oxidative stress. The catalytic efficiency is much higher for the hydrolysis of ADPR than 8-oxo-dGTP, suggesting a more relevant biological role in hydrolysis of ADPR. The protein is ADP-ribose pyrophosphatase of Mycobacterium tuberculosis (strain ATCC 25618 / H37Rv).